A 212-amino-acid polypeptide reads, in one-letter code: Large ribosomal subunit protein uL3 (212 aa).

Residues 117-142 form a disordered region; the sequence is TSKGKGFQGNIKRHNQSRGPMTHGSR.

It belongs to the universal ribosomal protein uL3 family. Part of the 50S ribosomal subunit. Forms a cluster with proteins L14 and L19.

One of the primary rRNA binding proteins, it binds directly near the 3'-end of the 23S rRNA, where it nucleates assembly of the 50S subunit. This is Large ribosomal subunit protein uL3 from Acholeplasma laidlawii (strain PG-8A).